Reading from the N-terminus, the 360-residue chain is MPNVTVALLFGGKSSEHEISIISAKAVSAHIDRTTYTLFPLYISRDGRWFKGRTARKVLDLDITGLLKSRTIETTNRQLLAMTENRDEDLFDFNFQKEGIEVAFPVLHGAYGEDGKIQGLLEVFAIPYTGCNVQSSSMTMDKEITKLCAVQAGIHVADYMTVLRPDYLNNRSAIAETIKKRFAPPFFVKPANLGSSVGIAKIHSFDELENALDEACRLDVKILVEKAIEGREVEVAVLGNEHPIASVPGEIEPGGDFYDFTDKYIDGSARLHIPARVDADTSARLQEEGIKAFRALGCSGMSRIDFFVEKGSGRIILNEINSIPGFTSISMYPMLMEHAGIGFTELIDRLVRFALEKTPA.

One can recognise an ATP-grasp domain in the interval 146–352 (KLCAVQAGIH…FTELIDRLVR (207 aa)). 179–234 (KKRFAPPFFVKPANLGSSVGIAKIHSFDELENALDEACRLDVKILVEKAIEGREVE) provides a ligand contact to ATP. Residues aspartate 305, glutamate 319, and asparagine 321 each contribute to the Mg(2+) site.

It belongs to the D-alanine--D-alanine ligase family. The cofactor is Mg(2+). Mn(2+) is required as a cofactor.

It localises to the cytoplasm. The catalysed reaction is 2 D-alanine + ATP = D-alanyl-D-alanine + ADP + phosphate + H(+). The protein operates within cell wall biogenesis; peptidoglycan biosynthesis. Its function is as follows. Cell wall formation. In Chlorobium phaeobacteroides (strain BS1), this protein is D-alanine--D-alanine ligase.